A 176-amino-acid polypeptide reads, in one-letter code: Peptide methionine sulfoxide reductase B3 (176 aa).

The signal sequence occupies residues 1-26; that stretch reads MNIVNSKILFLSFTLLLLLQSSIVES. The MsrB domain occupies 51–172; the sequence is DEEWRAILSP…NSVSLKFTPA (122 aa). The Zn(2+) site is built by cysteine 90, cysteine 93, cysteine 136, and cysteine 139. Cysteine 108 and cysteine 161 form a disulfide bridge. The Nucleophile role is filled by cysteine 161.

This sequence belongs to the MsrB Met sulfoxide reductase family. Zn(2+) serves as cofactor.

It localises to the endoplasmic reticulum. The enzyme catalyses L-methionyl-[protein] + [thioredoxin]-disulfide + H2O = L-methionyl-(R)-S-oxide-[protein] + [thioredoxin]-dithiol. Its function is as follows. Catalyzes the reduction of methionine sulfoxide (MetSO) to methionine in proteins. Plays a protective role against oxidative stress by restoring activity to proteins that have been inactivated by methionine oxidation. Involved in cold tolerance. Eliminates MetSO and reactive oxygen species that accumulate at the ER during cold acclimation. MSRB family specifically reduces the MetSO R-enantiomer. The polypeptide is Peptide methionine sulfoxide reductase B3 (MSRB3) (Arabidopsis thaliana (Mouse-ear cress)).